Reading from the N-terminus, the 478-residue chain is Tubulin gamma chain (478 aa).

Residue 141–147 (AGGTGSG) coordinates GTP. Residues 451 to 478 (ISQKESSSLANENGNGANNKPGKSAMAL) are disordered. The segment covering 459-468 (LANENGNGAN) has biased composition (polar residues).

Belongs to the tubulin family.

Its subcellular location is the cytoplasm. It is found in the cytoskeleton. The protein resides in the microtubule organizing center. It localises to the centrosome. Its function is as follows. Tubulin is the major constituent of microtubules. The gamma chain is found at microtubule organizing centers (MTOC) such as the spindle poles or the centrosome, suggesting that it is involved in the minus-end nucleation of microtubule assembly. The polypeptide is Tubulin gamma chain (Reticulomyxa filosa).